We begin with the raw amino-acid sequence, 91 residues long: Cell division topological specificity factor (91 aa).

This sequence belongs to the MinE family.

Its function is as follows. Prevents the cell division inhibition by proteins MinC and MinD at internal division sites while permitting inhibition at polar sites. This ensures cell division at the proper site by restricting the formation of a division septum at the midpoint of the long axis of the cell. This is Cell division topological specificity factor from Bradyrhizobium sp. (strain BTAi1 / ATCC BAA-1182).